The sequence spans 341 residues: Queuosine 5'-phosphate N-glycosylase/hydrolase (341 aa).

Methionine 1 carries the post-translational modification N-acetylmethionine. Residues histidine 53, phenylalanine 237, aspartate 239, aspartate 314, tyrosine 315, and aspartate 319 each contribute to the queuine site. The Nucleophile or transition state stabilizer role is filled by aspartate 239.

Belongs to the QNG1 protein family.

The catalysed reaction is queuosine 5'-phosphate + H2O = queuine + D-ribose 5-phosphate. Catalyzes the hydrolysis of queuosine 5'-phosphate, releasing the nucleobase queuine (q). Is required for salvage of queuine from exogenous queuosine (Q) that is imported and then converted to queuosine 5'-phosphate intracellularly. The sequence is that of Queuosine 5'-phosphate N-glycosylase/hydrolase from Bos taurus (Bovine).